The primary structure comprises 345 residues: Holliday junction branch migration complex subunit RuvB (345 aa).

The segment at 1–186 (MSTDPDEREV…FGFTAHMDFY (186 aa)) is large ATPase domain (RuvB-L). ATP is bound by residues L25, R26, G67, K70, T71, S72, 133-135 (EDF), R176, Y186, and R223. T71 contacts Mg(2+). The tract at residues 187–257 (EPAELERVLV…VAKAALAVYD (71 aa)) is small ATPAse domain (RuvB-S). The head domain (RuvB-H) stretch occupies residues 260-345 (ELGLDRLDRA…AGANQPGLFE (86 aa)). DNA-binding residues include R315 and R320.

Belongs to the RuvB family. In terms of assembly, homohexamer. Forms an RuvA(8)-RuvB(12)-Holliday junction (HJ) complex. HJ DNA is sandwiched between 2 RuvA tetramers; dsDNA enters through RuvA and exits via RuvB. An RuvB hexamer assembles on each DNA strand where it exits the tetramer. Each RuvB hexamer is contacted by two RuvA subunits (via domain III) on 2 adjacent RuvB subunits; this complex drives branch migration. In the full resolvosome a probable DNA-RuvA(4)-RuvB(12)-RuvC(2) complex forms which resolves the HJ.

The protein localises to the cytoplasm. It carries out the reaction ATP + H2O = ADP + phosphate + H(+). Functionally, the RuvA-RuvB-RuvC complex processes Holliday junction (HJ) DNA during genetic recombination and DNA repair, while the RuvA-RuvB complex plays an important role in the rescue of blocked DNA replication forks via replication fork reversal (RFR). RuvA specifically binds to HJ cruciform DNA, conferring on it an open structure. The RuvB hexamer acts as an ATP-dependent pump, pulling dsDNA into and through the RuvAB complex. RuvB forms 2 homohexamers on either side of HJ DNA bound by 1 or 2 RuvA tetramers; 4 subunits per hexamer contact DNA at a time. Coordinated motions by a converter formed by DNA-disengaged RuvB subunits stimulates ATP hydrolysis and nucleotide exchange. Immobilization of the converter enables RuvB to convert the ATP-contained energy into a lever motion, pulling 2 nucleotides of DNA out of the RuvA tetramer per ATP hydrolyzed, thus driving DNA branch migration. The RuvB motors rotate together with the DNA substrate, which together with the progressing nucleotide cycle form the mechanistic basis for DNA recombination by continuous HJ branch migration. Branch migration allows RuvC to scan DNA until it finds its consensus sequence, where it cleaves and resolves cruciform DNA. The polypeptide is Holliday junction branch migration complex subunit RuvB (Mycobacterium marinum (strain ATCC BAA-535 / M)).